A 593-amino-acid polypeptide reads, in one-letter code: Tyrosine-protein phosphatase non-receptor type 11 (593 aa).

N-acetylthreonine is present on Thr-2. SH2 domains are found at residues Trp-6–Leu-102 and Trp-112–Leu-216. Phosphotyrosine occurs at positions 62 and 66. The 271-residue stretch at Phe-247–Ala-517 folds into the Tyrosine-protein phosphatase domain. Residues Asp-425, Cys-459–Arg-465, and Gln-506 each bind substrate. Cys-459 acts as the Phosphocysteine intermediate in catalysis. Phosphotyrosine; by PDGFR is present on residues Tyr-542 and Tyr-580.

It belongs to the protein-tyrosine phosphatase family. Non-receptor class 2 subfamily. In terms of assembly, interacts with phosphorylated SIT1, LIME1, BCAR3 and MZPL1. Interacts with FCRL4, FCRL6, ANKHD1, SHB, INPP5D/SHIP1 and CD84. Interacts with MILR1 (tyrosine-phosphorylated). Interacts with FLT1 (tyrosine-phosphorylated), FLT3 (tyrosine-phosphorylated), FLT4 (tyrosine-phosphorylated), KIT and GRB2. Interacts with PTPNS1. Interacts with KIR2DL1; the interaction is enhanced by ARRB2. Interacts (via SH2 domain) with TEK/TIE2 (tyrosine phosphorylated). Interacts with GAB2. Interacts with TERT; the interaction retains TERT in the nucleus. Interacts with PECAM1 and FER. Interacts with EPHA2 (activated); participates in PTK2/FAK1 dephosphorylation in EPHA2 downstream signaling. Interacts with PDGFRA (tyrosine phosphorylated). Interacts with PDGFRB (tyrosine phosphorylated); this interaction increases the PTPN11 phosphatase activity. Interacts with ROS1; this mediates PTPN11 phosphorylation. Interacts with CEACAM1 (via cytoplasmic domain); this interaction depends on the monomer/dimer equilibrium and is phosphorylation-dependent. Interacts with MPIG6B (via ITIM motif). Interacts with SIGLEC10. Interacts with CLEC12B (via ITIM motif); this interaction triggers dephosphorylation and activation of PTPN11. Interacts (via SH2 domains) with NEDD9/CAS-L; the interaction is enhanced when NEDD9/CAS-L is tyrosine phosphorylated. Post-translationally, phosphorylated on Tyr-542 and Tyr-580 upon receptor protein tyrosine kinase activation; which creates a binding site for GRB2 and other SH2-containing proteins. Phosphorylated upon activation of the receptor-type kinase FLT3. Phosphorylated upon activation of the receptor-type kinase PDGFRA. Phosphorylated by activated PDGFRB. Expressed in brain, muscle and lung.

The protein resides in the cytoplasm. The enzyme catalyses O-phospho-L-tyrosyl-[protein] + H2O = L-tyrosyl-[protein] + phosphate. Inhibited by orthovanadate, molybdate and spermidine. In terms of biological role, acts downstream of various receptor and cytoplasmic protein tyrosine kinases to participate in the signal transduction from the cell surface to the nucleus. Positively regulates MAPK signal transduction pathway. Dephosphorylates GAB1, ARHGAP35 and EGFR. Dephosphorylates ROCK2 at 'Tyr-722' resulting in stimulation of its RhoA binding activity. Dephosphorylates CDC73. Dephosphorylates SOX9 on tyrosine residues, leading to inactivate SOX9 and promote ossification. Dephosphorylates tyrosine-phosphorylated NEDD9/CAS-L. The chain is Tyrosine-protein phosphatase non-receptor type 11 (Ptpn11) from Rattus norvegicus (Rat).